The sequence spans 1923 residues: Endoribonuclease Dicer (1923 aa).

In terms of domain architecture, Helicase ATP-binding spans 51–227 (LLEAALDHNT…ELEEKIQKLE (177 aa)). 64–71 (LNTGSGKT) provides a ligand contact to ATP. The DECH box signature appears at 175–178 (DECH). Residues 256–595 (DCGPFTDRSG…LRNKCSKSVD (340 aa)) are required for interaction with PRKRA and TARBP2. The segment at 410–433 (VSWSDSEDDEEDEEIEEKEKPETN) is disordered. Phosphoserine is present on residues Ser413 and Ser415. Positions 414-425 (DSEDDEEDEEIE) are enriched in acidic residues. The region spanning 433–602 (NFPSPFTNIL…SVDTGEADTE (170 aa)) is the Helicase C-terminal domain. Residues 629-721 (AIGHVNRYCA…MPVGKETVKY (93 aa)) enclose the Dicer dsRNA-binding fold domain. The 148-residue stretch at 894 to 1041 (KFMEDIEKSE…LVPELCAIHP (148 aa)) folds into the PAZ domain. Residues Ser1015 and Ser1160 each carry the phosphoserine modification. Composition is skewed to polar residues over residues 1246–1255 (NANTSTSDGS) and 1277–1290 (SEQS…SRTL). The interval 1246–1291 (NANTSTSDGSPVTAAVPGTTETGEAPPDRTASEQSPSPGYSSRTLG) is disordered. Residues 1276-1404 (ASEQSPSPGY…TEKWEKDEMT (129 aa)) form the RNase III 1 domain. 3 residues coordinate Mg(2+): Glu1316, Glu1396, and Glu1399. 3 positions are modified to phosphoserine: Ser1461, Ser1469, and Ser1471. One can recognise an RNase III 2 domain in the interval 1667-1825 (FENFEKKINY…LAGAIYMDSG (159 aa)). Positions 1706, 1811, and 1814 each coordinate Mg(2+). Positions 1853-1915 (SPVRELLEME…ARRALRSLKA (63 aa)) constitute a DRBM domain. A Phosphoserine modification is found at Ser1869.

The protein belongs to the helicase family. Dicer subfamily. Component of the RISC loading complex (RLC), or micro-RNA (miRNA) loading complex (miRLC), which is composed of DICER1, AGO2 and TARBP2; DICER1 and TARBP2 are required to process precursor miRNAs (pre-miRNAs) to mature miRNAs and then load them onto AGO2. Note that the trimeric RLC/miRLC is also referred to as RISC. Interacts with DHX9, AGO1, PIWIL1 and PRKRA. Interacts with AGO2, TARBP2, EIF6, MOV10 and RPL7A (60S ribosome subunit); they form a large RNA-induced silencing complex (RISC). Interacts with BCDIN3D. Interacts (via Dicer dsRNA-binding fold domain) with ALOX5 (via PLAT domain); this interaction enhances arachidonate 5-lipoxygenase activity and modifies the miRNA precursor processing activity of DICER1. It depends on Mg(2+) as a cofactor. The cofactor is Mn(2+).

Its subcellular location is the cytoplasm. The enzyme catalyses Endonucleolytic cleavage to 5'-phosphomonoester.. In terms of biological role, double-stranded RNA (dsRNA) endoribonuclease playing a central role in short dsRNA-mediated post-transcriptional gene silencing. Cleaves naturally occurring long dsRNAs and short hairpin pre-microRNAs (miRNA) into fragments of twenty-one to twenty-three nucleotides with 3' overhang of two nucleotides, producing respectively short interfering RNAs (siRNA) and mature microRNAs. SiRNAs and miRNAs serve as guide to direct the RNA-induced silencing complex (RISC) to complementary RNAs to degrade them or prevent their translation. Gene silencing mediated by siRNAs, also called RNA interference, controls the elimination of transcripts from mobile and repetitive DNA elements of the genome but also the degradation of exogenous RNA of viral origin for instance. The miRNA pathway on the other side is a mean to specifically regulate the expression of target genes. The sequence is that of Endoribonuclease Dicer (DICER1) from Bos taurus (Bovine).